A 269-amino-acid polypeptide reads, in one-letter code: Thiazole synthase (269 aa).

K109 (schiff-base intermediate with DXP) is an active-site residue. Residues G170, 196-197 (AG), and 218-219 (NT) each bind 1-deoxy-D-xylulose 5-phosphate.

This sequence belongs to the ThiG family. As to quaternary structure, homotetramer. Forms heterodimers with either ThiH or ThiS.

The protein localises to the plastid. It is found in the chloroplast. The enzyme catalyses [ThiS sulfur-carrier protein]-C-terminal-Gly-aminoethanethioate + 2-iminoacetate + 1-deoxy-D-xylulose 5-phosphate = [ThiS sulfur-carrier protein]-C-terminal Gly-Gly + 2-[(2R,5Z)-2-carboxy-4-methylthiazol-5(2H)-ylidene]ethyl phosphate + 2 H2O + H(+). It functions in the pathway cofactor biosynthesis; thiamine diphosphate biosynthesis. In terms of biological role, catalyzes the rearrangement of 1-deoxy-D-xylulose 5-phosphate (DXP) to produce the thiazole phosphate moiety of thiamine. Sulfur is provided by the thiocarboxylate moiety of the carrier protein ThiS. In vitro, sulfur can be provided by H(2)S. This chain is Thiazole synthase, found in Thalassiosira pseudonana (Marine diatom).